The sequence spans 112 residues: uncharacterized protein (112 aa).

The helical transmembrane segment at 82–104 threads the bilayer; it reads IFFGFSIIASYFLKFHLLYVILL.

It is found in the membrane. This is an uncharacterized protein from Pasteurella multocida (strain Pm70).